A 242-amino-acid polypeptide reads, in one-letter code: ATP-dependent dethiobiotin synthetase BioD (242 aa).

Position 12–17 (12–17 (EVGKTV)) interacts with ATP. Position 16 (T16) interacts with Mg(2+). K37 is a catalytic residue. S41 lines the substrate pocket. ATP-binding positions include D51 and 112 to 115 (EGAG). Residues D51 and E112 each coordinate Mg(2+).

Belongs to the dethiobiotin synthetase family. In terms of assembly, homodimer. Mg(2+) is required as a cofactor.

It is found in the cytoplasm. It catalyses the reaction (7R,8S)-7,8-diammoniononanoate + CO2 + ATP = (4R,5S)-dethiobiotin + ADP + phosphate + 3 H(+). It participates in cofactor biosynthesis; biotin biosynthesis; biotin from 7,8-diaminononanoate: step 1/2. In terms of biological role, catalyzes a mechanistically unusual reaction, the ATP-dependent insertion of CO2 between the N7 and N8 nitrogen atoms of 7,8-diaminopelargonic acid (DAPA, also called 7,8-diammoniononanoate) to form a ureido ring. This is ATP-dependent dethiobiotin synthetase BioD from Bacillus cereus (strain ATCC 14579 / DSM 31 / CCUG 7414 / JCM 2152 / NBRC 15305 / NCIMB 9373 / NCTC 2599 / NRRL B-3711).